The following is a 196-amino-acid chain: MSEKATEIANLLSPTVDSLGVELLGVEYLPAPGGATLRLYIDVPLAEQPERVINVDDCERVSREVSAQLDVEDPISGHYTLEVSSPGVDRPLFTLEQFARHAGESTKIVLKLAQDGRRRFQGEILRIDAEAGAVVFAIDGKDVQIGFDNIDKARILPDWVALGLAPQKPNKPGPKKTGHEKKKPSNESAAGKPRAE.

Positions 164–196 are disordered; sequence LAPQKPNKPGPKKTGHEKKKPSNESAAGKPRAE. Basic residues predominate over residues 173-182; it reads GPKKTGHEKK.

Belongs to the RimP family.

Its subcellular location is the cytoplasm. Functionally, required for maturation of 30S ribosomal subunits. The polypeptide is Ribosome maturation factor RimP (Xanthomonas oryzae pv. oryzae (strain MAFF 311018)).